A 250-amino-acid chain; its full sequence is Corrinoid adenosyltransferase MMAB (250 aa).

The transit peptide at 1-32 (MAVCGLGSRLGLGSRLGLRGCFGAARLLYPRF) directs the protein to the mitochondrion. Positions 34 to 59 (SRGPQGVEDGDRPQPSSKTPRIPKIY) are disordered. ATP is bound by residues 60 to 63 (TKTG), 68 to 69 (SS), and lysine 78. Serine 134 carries the phosphoserine modification. 190 to 194 (RRAER) provides a ligand contact to ATP. Lysine 211 is modified (N6-succinyllysine). Asparagine 214 contacts ATP. Lysine 230 bears the N6-acetyllysine; alternate mark. The residue at position 230 (lysine 230) is an N6-succinyllysine; alternate.

It belongs to the Cob(I)alamin adenosyltransferase family. As to quaternary structure, homotrimer. As to expression, expressed in liver and skeletal muscle.

The protein localises to the mitochondrion. The catalysed reaction is cob(I)alamin-[corrinoid adenosyltransferase] + ATP = apo-[corrinoid adenosyltransferase] + adenosylcob(III)alamin + triphosphate. Functionally, converts cob(I)alamin to adenosylcobalamin (adenosylcob(III)alamin), a coenzyme for methylmalonyl-CoA mutase, therefore participates in the final step of the vitamin B12 conversion. Generates adenosylcobalamin (AdoCbl) and directly delivers the cofactor to MUT in a transfer that is stimulated by ATP-binding to MMAB and gated by MMAA. The polypeptide is Corrinoid adenosyltransferase MMAB (Homo sapiens (Human)).